Here is a 184-residue protein sequence, read N- to C-terminus: Effector CFEM1 (184 aa).

Residues 1–17 (MKYSVAFVALAAVAAQA) form the signal peptide. Positions 18–112 (QSLADVPKCA…PTTTAAATST (95 aa)) constitute a CFEM domain. 4 cysteine pairs are disulfide-bonded: Cys-26–Cys-68, Cys-30–Cys-63, Cys-41–Cys-48, and Cys-50–Cys-85. Asp-45 provides a ligand contact to heme. 2 disordered regions span residues 83-106 (NLCKNPPKESEAKSTAEEEKPTTT) and 136-163 (IIPTTAAEEPATSTPAAATPTKGPEQAN). The span at 88–103 (PPKESEAKSTAEEEKP) shows a compositional bias: basic and acidic residues. A lipid anchor (GPI-anchor amidated asparagine) is attached at Asn-163. Residues 164–184 (GAAGLKGLGALAMAAFAALAL) constitute a propeptide, removed in mature form.

This sequence belongs to the RBT5 family. As to quaternary structure, interacts with Z.mays LRR5; the interaction is direct. Interacts (via CFEM domain) with Z.mays WAK17 isoform 2; the interaction is direct.

It localises to the secreted. Its subcellular location is the cell wall. The protein resides in the cell membrane. It is found in the cell septum. The protein localises to the cytoplasm. In terms of biological role, suppresses host programmed cell death during infection by binding to Z.mays WAK17 isoform 2 and Z.mays LRR5, to prevent activation of Z.mays WAK17 isoform 1 and the downstream hypersensitive response. In Gibberella zeae (strain ATCC MYA-4620 / CBS 123657 / FGSC 9075 / NRRL 31084 / PH-1) (Wheat head blight fungus), this protein is Effector CFEM1.